The primary structure comprises 225 residues: uncharacterized protein (225 aa).

4 consecutive transmembrane segments (helical) span residues 40–60 (LISL…LSIV), 63–83 (LAFF…PFSF), 151–171 (LSET…LTIL), and 176–196 (IFSL…IVSL).

The protein resides in the membrane. This is an uncharacterized protein from Saccharomyces cerevisiae (strain ATCC 204508 / S288c) (Baker's yeast).